Here is a 612-residue protein sequence, read N- to C-terminus: Chaperone protein DnaK (612 aa).

Position 173 is a phosphothreonine; by autocatalysis (T173). The interval A576–K612 is disordered. Residues K578 to A588 are compositionally biased toward low complexity. Acidic residues predominate over residues N596–K612.

Belongs to the heat shock protein 70 family.

Functionally, acts as a chaperone. The chain is Chaperone protein DnaK from Bacillus velezensis (strain DSM 23117 / BGSC 10A6 / LMG 26770 / FZB42) (Bacillus amyloliquefaciens subsp. plantarum).